We begin with the raw amino-acid sequence, 325 residues long: Alpha-cuprenene synthase COP6 (325 aa).

Positions 102, 166, 224, 228, and 232 each coordinate Mg(2+).

It belongs to the trichodiene synthase family. Mg(2+) is required as a cofactor.

Alpha-cuprenene synthase; part of the gene cluster that mediates the biosynthesis of alpha-cuprenene and oxidized derivatives. The alpha-cuprenene synthase COP6 is the only sesquiterpene synthase identified in C.cinereus that appears to be part of a biosynthetic gene cluster and is highly specific since it catalyzes the cyclization of (2E,6E)-farnesyl diphosphate into only one product, alpha-cuprenene. COP6 is also able to perform the cyclization of geranyl diphosphate. The cytochrome P450 monooxygenase COX2 then oxidizes the cyclohexadiene ring of alpha-cuprenene at positions 1 and 4, yielding first alpha-cuparene, followed by alpha-cuparophenol and a further yet unidentified compound resulting from one additional oxidation step. The cytochrome P450 monooxygenase COX1 then likely catalyzes the oxidation at position 9 of the pentane ring of alpha-cuprenene to give the corresponding hydroxy or ketone derivatives. This Coprinopsis cinerea (strain Okayama-7 / 130 / ATCC MYA-4618 / FGSC 9003) (Inky cap fungus) protein is Alpha-cuprenene synthase COP6.